The primary structure comprises 227 residues: Large ribosomal subunit protein uL1 (227 aa).

The protein belongs to the universal ribosomal protein uL1 family. In terms of assembly, part of the 50S ribosomal subunit.

In terms of biological role, binds directly to 23S rRNA. The L1 stalk is quite mobile in the ribosome, and is involved in E site tRNA release. Its function is as follows. Protein L1 is also a translational repressor protein, it controls the translation of the L11 operon by binding to its mRNA. The protein is Large ribosomal subunit protein uL1 of Tropheryma whipplei (strain TW08/27) (Whipple's bacillus).